Reading from the N-terminus, the 403-residue chain is Argininosuccinate synthase (403 aa).

ATP is bound by residues alanine 13–serine 21 and alanine 40. L-citrulline-binding residues include tyrosine 91 and serine 96. Glycine 121 serves as a coordination point for ATP. L-aspartate is bound by residues threonine 123, asparagine 127, and aspartate 128. Position 127 (asparagine 127) interacts with L-citrulline. Residues arginine 131, serine 180, serine 189, glutamate 265, and tyrosine 277 each contribute to the L-citrulline site.

The protein belongs to the argininosuccinate synthase family. Type 1 subfamily. As to quaternary structure, homotetramer.

Its subcellular location is the cytoplasm. It carries out the reaction L-citrulline + L-aspartate + ATP = 2-(N(omega)-L-arginino)succinate + AMP + diphosphate + H(+). Its pathway is amino-acid biosynthesis; L-arginine biosynthesis; L-arginine from L-ornithine and carbamoyl phosphate: step 2/3. This Leptospira interrogans serogroup Icterohaemorrhagiae serovar copenhageni (strain Fiocruz L1-130) protein is Argininosuccinate synthase.